We begin with the raw amino-acid sequence, 385 residues long: 1-deoxy-D-xylulose 5-phosphate reductoisomerase (385 aa).

NADPH contacts are provided by T13, G14, S15, I16, N40, and N122. Residue K123 coordinates 1-deoxy-D-xylulose 5-phosphate. E124 contacts NADPH. D148 contributes to the Mn(2+) binding site. 1-deoxy-D-xylulose 5-phosphate-binding residues include S149, E150, S177, and H200. E150 is a Mn(2+) binding site. NADPH is bound at residue G206. S213, N218, K219, and E222 together coordinate 1-deoxy-D-xylulose 5-phosphate. Mn(2+) is bound at residue E222.

Belongs to the DXR family. The cofactor is Mg(2+). Mn(2+) is required as a cofactor.

The catalysed reaction is 2-C-methyl-D-erythritol 4-phosphate + NADP(+) = 1-deoxy-D-xylulose 5-phosphate + NADPH + H(+). The protein operates within isoprenoid biosynthesis; isopentenyl diphosphate biosynthesis via DXP pathway; isopentenyl diphosphate from 1-deoxy-D-xylulose 5-phosphate: step 1/6. In terms of biological role, catalyzes the NADPH-dependent rearrangement and reduction of 1-deoxy-D-xylulose-5-phosphate (DXP) to 2-C-methyl-D-erythritol 4-phosphate (MEP). This chain is 1-deoxy-D-xylulose 5-phosphate reductoisomerase, found in Francisella tularensis subsp. holarctica (strain FTNF002-00 / FTA).